We begin with the raw amino-acid sequence, 273 residues long: 5-deoxy-glucuronate isomerase (273 aa).

The protein belongs to the isomerase IolB family.

It carries out the reaction 5-deoxy-D-glucuronate = 5-dehydro-2-deoxy-D-gluconate. It participates in polyol metabolism; myo-inositol degradation into acetyl-CoA; acetyl-CoA from myo-inositol: step 4/7. Its function is as follows. Involved in the isomerization of 5-deoxy-glucuronate (5DG) to 5-dehydro-2-deoxy-D-gluconate (DKG or 2-deoxy-5-keto-D-gluconate). In Listeria monocytogenes serotype 4b (strain CLIP80459), this protein is 5-deoxy-glucuronate isomerase.